The chain runs to 113 residues: Retrotransposon Gag-like protein 8A (113 aa).

The protein belongs to the FAM127 family.

This Homo sapiens (Human) protein is Retrotransposon Gag-like protein 8A.